Reading from the N-terminus, the 276-residue chain is 28 kDa ribonucleoprotein, chloroplastic (276 aa).

Residues 1–57 (MATNGCLISLPPFFTTTKSISSYPFLSTQLKPISLSSSLPTLLSLNKRTTQFPTFVS) constitute a chloroplast transit peptide. RRM domains are found at residues 97–175 (AKLF…KAAP) and 191–269 (YRIY…AAEE).

Its subcellular location is the plastid. It is found in the chloroplast. Functionally, probably involved in the 3'-end processing of chloroplast mRNA's. In Nicotiana sylvestris (Wood tobacco), this protein is 28 kDa ribonucleoprotein, chloroplastic.